Consider the following 988-residue polypeptide: MLHSLVPRYNKCVPFPTLRTDNNGARKQAEHPNNQSHHNHPHPTSNPNELPKPKRVLYPRENIRIGWKQSERKWQVGTGMINVGNTCYLNSTLQALLHIPALANWLVSEQAHLADCNVAEPGSGCIICAMAKTLLATQSNQSAVRPFLIYSKLKQICKHMVVGRQEDAHEFLRFLVEAMERAYLMRFRNYKELDQLVKETTPLGQIFGGYLRSEVRCLSCNHVSITFQHFQDLLLDIRKADSLEDAFEGHFSRERLEDMGYKCEGCKKKVSATKQFSLERAPITLCIQLKRFSMIGNKLTKQISFKPRIDLSKYAARSPAAQAQPLTYRLVSMVTHLGASQHCGHYTAIGSTDTGSFYNFDDSYVRPITMQNVCNTNAYIMFFELDLSQAASPPANRPNGVRLTNGHSTTPVPAATVSSPSPTRFIGPQLPPVGANGYTNGNAQKTAIQFKQQNQQNGLQLGTGKFQDTAKPPLVGAYAKGEATSAPTANGNKSSSPSSNSSSNHKSINQQQYLPISSDDEDIDDEMKPGPTTAQLPSMPNMTEDSTEPKAKSPVKIHLKTPVKTPLKSLVPYESASEEEEAPLPNPRQSTEGEDFSESDQESGQTNGHSKTNGSLTNGSASSSVHVNNSKQKTDAIDEIFKSLKKSADSEEDDDEEEPSIQLTNGWHPQKQSQSQSKAPPSPKTPPSPAVIKSKTGIWKVTRNDEVDAIDDDDDAVVVEGAPVKIPTPNKTHRNPFSSSKPSTDSPATPGAKRQKLLNGSALKSHQQPRVGNGYQSNVTSNGSTVNELLKQSYRGYGASVLSWNGKPAELEKEPFELVCAKRIAGHGSVEGSDIVEGSVAVDAAVTSSSDSNDVVVIAVALLVDAREQRQRDLDDDEENEMDRGRQRKVKSGSAKGNNASNSTPGYNPFQEYEGQKRWNKNGGGGGFSRFHNQNYRQNFQQRNKFKFNRFGGQGSAKFQQQRALQRHLSAGGGFSRRQPSAQQQQQT.

Residues Pro-16 to Arg-55 form a disordered region. Low complexity predominate over residues His-31–Asn-48. The region spanning Thr-78–Asp-386 is the USP domain. The active-site Nucleophile is Cys-87. His-345 acts as the Proton acceptor in catalysis. Disordered regions lie at residues Pro-393–Pro-422, Ala-483–Asn-782, and Glu-868–Thr-988. Low complexity-rich tracts occupy residues Ser-408 to Pro-422 and Asn-490 to Asn-509. A phosphoserine mark is found at Ser-419 and Ser-421. The segment covering Thr-532–Glu-544 has biased composition (polar residues). 2 positions are modified to phosphothreonine: Thr-561 and Thr-565. 2 positions are modified to phosphoserine: Ser-575 and Ser-577. Residues Glu-592 to Gln-601 are compositionally biased toward acidic residues. Over residues Glu-602 to Lys-631 the composition is skewed to polar residues. Residues Gln-632–Asp-649 are compositionally biased toward basic and acidic residues. A Phosphoserine modification is found at Ser-650. Positions Ser-650–Pro-659 are enriched in acidic residues. Residues Pro-669–Ala-679 show a composition bias toward low complexity. Pro residues predominate over residues Pro-680 to Pro-689. At Ser-682 the chain carries Phosphoserine. Phosphothreonine is present on Thr-685. The residue at position 688 (Ser-688) is a Phosphoserine. Acidic residues predominate over residues Val-707–Val-717. Thr-728 is modified (phosphothreonine). Residues Asn-735–Pro-747 are compositionally biased toward polar residues. Position 746 is a phosphoserine (Ser-746). Thr-749 is modified (phosphothreonine). The segment covering Ala-762 to Asn-782 has biased composition (polar residues). Low complexity-rich tracts occupy residues Ser-892–Ser-903 and Arg-930–Arg-943.

It belongs to the peptidase C19 family. In terms of assembly, interacts with atms/PAF1, but not with CycT.

The protein localises to the nucleus. The protein resides in the nucleolus. The enzyme catalyses Thiol-dependent hydrolysis of ester, thioester, amide, peptide and isopeptide bonds formed by the C-terminal Gly of ubiquitin (a 76-residue protein attached to proteins as an intracellular targeting signal).. Its function is as follows. Required for maintaining multiple types of adult stem cells, including male and female germline, epithelial follicle cell and intestinal stem cells. May function as a transcriptional repressor by continually deubiquiting histone H2B at the promoters of genes critical for cellular differentiation, thereby preventing histone H3 'Lys-4' trimethylation (H3K4). Controls selective autophagy activation by ubiquitinated proteins. This chain is Ubiquitin carboxyl-terminal hydrolase 36 (Usp36), found in Drosophila simulans (Fruit fly).